The primary structure comprises 264 residues: NAD-capped RNA hydrolase NudC (264 aa).

Residues Cys99 and Cys102 each contribute to the Zn(2+) site. Glu112 contacts substrate. Zn(2+)-binding residues include Cys117 and Cys120. Substrate is bound at residue Tyr125. A Nudix hydrolase domain is found at 126-253 (PVICPSIIVA…TIARKLIHVT (128 aa)). Residues Ala162, Glu178, and Glu182 each coordinate a divalent metal cation. Residues 163–184 (GFVEVGETFEQAVQREVFEETG) carry the Nudix box motif. 196–203 (QPWAFPNS) is a substrate binding site. Residue Glu223 coordinates a divalent metal cation. Residue Ala246 participates in substrate binding.

It belongs to the Nudix hydrolase family. NudC subfamily. Homodimer. Mg(2+) serves as cofactor. Requires Mn(2+) as cofactor. Zn(2+) is required as a cofactor.

The enzyme catalyses a 5'-end NAD(+)-phospho-ribonucleoside in mRNA + H2O = a 5'-end phospho-adenosine-phospho-ribonucleoside in mRNA + beta-nicotinamide D-ribonucleotide + 2 H(+). It catalyses the reaction NAD(+) + H2O = beta-nicotinamide D-ribonucleotide + AMP + 2 H(+). It carries out the reaction NADH + H2O = reduced beta-nicotinamide D-ribonucleotide + AMP + 2 H(+). Functionally, mRNA decapping enzyme that specifically removes the nicotinamide adenine dinucleotide (NAD) cap from a subset of mRNAs by hydrolyzing the diphosphate linkage to produce nicotinamide mononucleotide (NMN) and 5' monophosphate mRNA. The NAD-cap is present at the 5'-end of some mRNAs and stabilizes RNA against 5'-processing. Has preference for mRNAs with a 5'-end purine. Catalyzes the hydrolysis of a broad range of dinucleotide pyrophosphates. The polypeptide is NAD-capped RNA hydrolase NudC (Haemophilus influenzae (strain ATCC 51907 / DSM 11121 / KW20 / Rd)).